The sequence spans 116 residues: MVGGEATSAVEKLVSGVRQAADFAEQFRSYSESEKQWKARMEFILRHLPDYRDPPDGGGRLDQLLSLSMVWANHLFLGCSYNKDLLDKVMEMADGIEVEDLPQFTSRSELMKKHQS.

Met1 carries the post-translational modification N-acetylmethionine. One can recognise an XRN2-binding (XTBD) domain in the interval 24 to 116; it reads AEQFRSYSES…RSELMKKHQS (93 aa).

The protein belongs to the CARF family. As to quaternary structure, interacts with XRN2; the interaction is direct.

The chain is CDKN2AIP N-terminal-like protein (Cdkn2aipnl) from Rattus norvegicus (Rat).